We begin with the raw amino-acid sequence, 1103 residues long: Coatomer subunit beta (1103 aa).

7 HEAT repeats span residues 51–89, 94–129, 130–166, 247–284, 322–359, 365–404, and 405–441; these read EAYT…CRPD, EEMI…RQFK, VLEP…NFGL, QQKA…APVS, RTME…KNSV, VLKR…RFPE, and AAAS…TCVH.

As to quaternary structure, oligomeric complex that consists of at least the alpha, beta, beta', gamma, delta, epsilon and zeta subunits.

Its subcellular location is the cytoplasm. The protein localises to the golgi apparatus membrane. It is found in the cytoplasmic vesicle. The protein resides in the COPI-coated vesicle membrane. The coatomer is a cytosolic protein complex that binds to dilysine motifs and reversibly associates with Golgi non-clathrin-coated vesicles, which further mediate biosynthetic protein transport from the ER, via the Golgi up to the trans Golgi network. Coatomer complex is required for budding from Golgi membranes, and is essential for the retrograde Golgi-to-ER transport of dilysine-tagged proteins. This is Coatomer subunit beta from Toxoplasma gondii.